A 139-amino-acid chain; its full sequence is MLIPRKVKHRKQHHPGRTGHATGGTVVSFGEYGIQALTPAYVTNRQIESARIAMTRHVKRGGNVYINIFPDRPLTKKPAETRMGSGKGSVEWWVANVKPGRVLFELSGVDEATAREALTRAIHKLPLKARIIKREEGDA.

The segment covering M1 to R17 has biased composition (basic residues). The disordered stretch occupies residues M1–G24.

This sequence belongs to the universal ribosomal protein uL16 family. Part of the 50S ribosomal subunit.

Functionally, binds 23S rRNA and is also seen to make contacts with the A and possibly P site tRNAs. In Clavibacter michiganensis subsp. michiganensis (strain NCPPB 382), this protein is Large ribosomal subunit protein uL16.